The sequence spans 244 residues: MMRTQCLLGLRTFVAFAAKLWSFFIYLLRRQIRTVIQYQTVRYDILPLSPVSRNRLAQVKRKILVLDLDETLIHSHHDGVLRPTVRPGTPPDFILKVVIDKHPVRFFVHKRPHVDFFLEVVSQWYELVVFTASMEIYGSAVADKLDNSRSILKRRYYRQHCTLELGSYIKDLSVVHSDLSSIVILDNSPGAYRSHPDNAIPIKSWFSDPSDTALLNLLPMLDALRFTADVRSVLSRNLHQHRLW.

Residues 7-29 traverse the membrane as a helical segment; the sequence is LLGLRTFVAFAAKLWSFFIYLLR. Residues 57-224 form the FCP1 homology domain; sequence AQVKRKILVL…LNLLPMLDAL (168 aa).

The protein belongs to the dullard family. In terms of assembly, (Microbial infection) Interacts with Chandipura virus matrix protein. Interacts with CNEP1R1; the complex dephosphorylates LPIN1 and LPIN2. Muscle specific with lower expression in other metabolic tissues.

The protein localises to the endoplasmic reticulum membrane. Its subcellular location is the nucleus membrane. It catalyses the reaction O-phospho-L-seryl-[protein] + H2O = L-seryl-[protein] + phosphate. It carries out the reaction O-phospho-L-threonyl-[protein] + H2O = L-threonyl-[protein] + phosphate. Its function is as follows. Serine/threonine protein phosphatase forming with CNEP1R1 an active phosphatase complex that dephosphorylates and may activate LPIN1 and LPIN2. LPIN1 and LPIN2 are phosphatidate phosphatases that catalyze the conversion of phosphatidic acid to diacylglycerol and control the metabolism of fatty acids at different levels. May indirectly modulate the lipid composition of nuclear and/or endoplasmic reticulum membranes and be required for proper nuclear membrane morphology and/or dynamics. May also indirectly regulate the production of lipid droplets and triacylglycerol. May antagonize BMP signaling. This is CTD nuclear envelope phosphatase 1 (CTDNEP1) from Homo sapiens (Human).